Consider the following 339-residue polypeptide: Glyceraldehyde-3-phosphate dehydrogenase (339 aa).

Residues 12–13 (RI), Asp39, Arg84, and Ser127 contribute to the NAD(+) site. D-glyceraldehyde 3-phosphate-binding positions include 157–159 (SCT), Thr188, Arg203, 216–217 (TG), and Arg239. The Nucleophile role is filled by Cys158. Asn320 contacts NAD(+).

Belongs to the glyceraldehyde-3-phosphate dehydrogenase family. In terms of assembly, homotetramer.

It is found in the cytoplasm. The enzyme catalyses D-glyceraldehyde 3-phosphate + phosphate + NAD(+) = (2R)-3-phospho-glyceroyl phosphate + NADH + H(+). It functions in the pathway carbohydrate degradation; glycolysis; pyruvate from D-glyceraldehyde 3-phosphate: step 1/5. Functionally, catalyzes the oxidative phosphorylation of glyceraldehyde 3-phosphate (G3P) to 1,3-bisphosphoglycerate (BPG) using the cofactor NAD. The first reaction step involves the formation of a hemiacetal intermediate between G3P and a cysteine residue, and this hemiacetal intermediate is then oxidized to a thioester, with concomitant reduction of NAD to NADH. The reduced NADH is then exchanged with the second NAD, and the thioester is attacked by a nucleophilic inorganic phosphate to produce BPG. The sequence is that of Glyceraldehyde-3-phosphate dehydrogenase (gapA) from Mycobacterium avium.